We begin with the raw amino-acid sequence, 82 residues long: Putative ribonuclease VapC34 (82 aa).

Mg(2+) is bound at residue Asp-4.

Belongs to the PINc/VapC protein family. Requires Mg(2+) as cofactor.

In terms of biological role, toxic component of a possible type II toxin-antitoxin (TA) system. A putative RNase. Its cognate antitoxin is VapB34. The chain is Putative ribonuclease VapC34 (vapC34) from Mycobacterium tuberculosis (strain CDC 1551 / Oshkosh).